A 257-amino-acid polypeptide reads, in one-letter code: Homeobox protein goosecoid (257 aa).

Residues 160–219 (KRRHRTIFTDEQLEALENLFQETKYPDVGTREQLARKVHLREEKVEVWFKNRRAKWRRQK) constitute a DNA-binding region (homeobox). Residues 213 to 257 (AKWRRQKRSSSEESENAEKWNKTSSSKASPEKREEEGKSDLDSDS) are disordered. The span at 241-257 (SPEKREEEGKSDLDSDS) shows a compositional bias: basic and acidic residues.

Belongs to the paired homeobox family. Bicoid subfamily.

The protein localises to the nucleus. In terms of biological role, regulates chordin (CHRD). May play a role in spatial programing within discrete embryonic fields or lineage compartments during organogenesis. In concert with NKX3-2, plays a role in defining the structural components of the middle ear; required for the development of the entire tympanic ring. Probably involved in the regulatory networks that define neural crest cell fate specification and determine mesoderm cell lineages in mammals. This Gorilla gorilla gorilla (Western lowland gorilla) protein is Homeobox protein goosecoid (GSC).